A 449-amino-acid polypeptide reads, in one-letter code: UDP-N-acetylmuramate--L-alanine ligase (449 aa).

118–124 (GTHGKTT) serves as a coordination point for ATP.

It belongs to the MurCDEF family.

It localises to the cytoplasm. It carries out the reaction UDP-N-acetyl-alpha-D-muramate + L-alanine + ATP = UDP-N-acetyl-alpha-D-muramoyl-L-alanine + ADP + phosphate + H(+). It functions in the pathway cell wall biogenesis; peptidoglycan biosynthesis. Cell wall formation. The protein is UDP-N-acetylmuramate--L-alanine ligase of Flavobacterium johnsoniae (strain ATCC 17061 / DSM 2064 / JCM 8514 / BCRC 14874 / CCUG 350202 / NBRC 14942 / NCIMB 11054 / UW101) (Cytophaga johnsonae).